We begin with the raw amino-acid sequence, 187 residues long: Ribosome hibernation promotion factor (187 aa).

Belongs to the HPF/YfiA ribosome-associated protein family. Long HPF subfamily. In terms of assembly, interacts with 100S ribosomes.

It is found in the cytoplasm. Functionally, involved in 100S ribosome formation from 70S ribosomes; 100S ribosomes are probably translationally inactive. Ribosome hibernation may be used by the cell to decrease overall energy consumption under nutrient-limiting conditions. Unlike E.coli, 100S ribosomes are present from mid-exponential growth, peak during the transition from log to stationary phase and then decrease. The sequence is that of Ribosome hibernation promotion factor from Listeria monocytogenes serotype 1/2a (strain 10403S).